The chain runs to 957 residues: Receptor-like protein 34 (957 aa).

The N-terminal stretch at 1 to 31 (MKGSWVVSTSIIRITLSFTFLFICHFSDVLA) is a signal peptide. Over 32 to 910 (APTRHLCRPE…EEEDEDLISW (879 aa)) the chain is Extracellular. Asn78, Asn101, Asn114, Asn143, Asn167, Asn191, and Asn215 each carry an N-linked (GlcNAc...) asparagine glycan. 18 LRR repeats span residues 120–143 (LHFL…SIEN), 144–167 (LSHL…SIGN), 168–192 (LSRL…IGNL), 194–216 (HLTF…IGNL), 217–240 (SHLT…IGGL), 241–264 (SNLT…IGNL), 266–287 (QLIV…SFGN), 288–312 (LNQL…LLNL), 313–336 (TGLS…ITSL), 338–360 (NLMA…LFII), 361–384 (PSLT…NISS), 386–409 (SNLQ…ISKL), 412–434 (LQEL…IFSH), 435–459 (LKSL…ILPY), 460–483 (FKTL…SVSS), 487–510 (SQSI…LRTQ), 511–534 (HELG…LWTL), and 535–557 (PNLF…TKPE). Asn242 and Asn263 each carry an N-linked (GlcNAc...) asparagine glycan. Asn311 and Asn332 each carry an N-linked (GlcNAc...) asparagine glycan. Asn381 carries an N-linked (GlcNAc...) asparagine glycan. A glycan (N-linked (GlcNAc...) asparagine) is linked at Asn477. N-linked (GlcNAc...) asparagine glycosylation is found at Asn541, Asn544, Asn569, Asn593, Asn608, and Asn618. An LRR 19; degenerate repeat occupies 558–580 (PSMAYLLGSNNNFTGKIPSFICE). LRR repeat units lie at residues 581 to 605 (LRSL…MENL), 606 to 630 (KSNL…IFES), 632 to 652 (RSLD…LRFF), 653 to 675 (SNLE…WLSS), 677 to 698 (QKLQ…QALF), 699 to 722 (PKLR…YFVE), 765 to 789 (LTIY…IGLL), 790 to 813 (KELH…IGNL), 815 to 837 (ALES…IGNL), and 839 to 862 (LLSY…QFLT). An N-linked (GlcNAc...) asparagine glycan is attached at Asn712. N-linked (GlcNAc...) asparagine glycosylation is found at Asn796, Asn812, Asn836, and Asn844. A helical transmembrane segment spans residues 911–931 (IAAAIGFGPGIAFGLMFGYIL). The Cytoplasmic portion of the chain corresponds to 932-957 (VSYKPEWFMNPFGRNNRRRKRHTTTH).

It belongs to the RLP family.

It localises to the cell membrane. In Arabidopsis thaliana (Mouse-ear cress), this protein is Receptor-like protein 34.